We begin with the raw amino-acid sequence, 118 residues long: MKRIAFVFSTAPHGSASGREGLDALLATSALTEALGVFFISDGVFQLLPGQKPDAVLARDYIATFKLFDLYDIDQCWICAASLRERGLESVNFVVDATPLEPVALRRELGNYDVILRF.

This sequence belongs to the DsrF/TusC family. In terms of assembly, heterohexamer, formed by a dimer of trimers. The hexameric TusBCD complex contains 2 copies each of TusB, TusC and TusD. The TusBCD complex interacts with TusE.

It localises to the cytoplasm. In terms of biological role, part of a sulfur-relay system required for 2-thiolation of 5-methylaminomethyl-2-thiouridine (mnm(5)s(2)U) at tRNA wobble positions. This Salmonella gallinarum (strain 287/91 / NCTC 13346) protein is Protein TusC.